A 207-amino-acid polypeptide reads, in one-letter code: Protein MK0488 (207 aa).

Residues 8–200 (EEGEFLVRLA…EEEPEGPVRE (193 aa)) form the AMMECR1 domain.

In Methanopyrus kandleri (strain AV19 / DSM 6324 / JCM 9639 / NBRC 100938), this protein is Protein MK0488.